Reading from the N-terminus, the 80-residue chain is Conotoxin Ca11.3 (80 aa).

Residues 1–19 form the signal peptide; it reads MKLVLAIVVILMLLSLSTG. Residues 20 to 42 constitute a propeptide that is removed on maturation; it reads AEMSDNHASRSATALRDRLLSPK. 4 disulfide bridges follow: C46–C60, C53–C65, C59–C72, and C64–C79.

The protein belongs to the conotoxin I3 superfamily. Expressed by the venom duct.

Its subcellular location is the secreted. This is Conotoxin Ca11.3 from Conus caracteristicus (Characteristic cone).